A 361-amino-acid polypeptide reads, in one-letter code: Salt tolerance receptor-like cytoplasmic kinase 1 (361 aa).

3 S-palmitoyl cysteine lipidation sites follow: Cys-5, Cys-10, and Cys-14. The Protein kinase domain maps to Gly-67 to Leu-347. ATP contacts are provided by residues Ile-73–Val-81 and Lys-95. Catalysis depends on Asp-195, which acts as the Proton acceptor.

Belongs to the protein kinase superfamily. Ser/Thr protein kinase family. Self-interacts. Interacts with CATA, CATB and CATC at the plasma membrane. In terms of processing, palmitoylated. Palmotylation at Cys-5, Cys-10 and Cys-14 by DHHC9 is required for plasma membrane targeting and STRK1 function. Post-translationally, autophosphorylated. Accumulates in seeds. Mainly expressed in young roots, and, to a lower extent, in leaf veins, seedlings, stems, leaf sheath and young spikelet.

Its subcellular location is the cell membrane. The enzyme catalyses L-seryl-[protein] + ATP = O-phospho-L-seryl-[protein] + ADP + H(+). The catalysed reaction is L-threonyl-[protein] + ATP = O-phospho-L-threonyl-[protein] + ADP + H(+). It catalyses the reaction L-tyrosyl-[protein] + ATP = O-phospho-L-tyrosyl-[protein] + ADP + H(+). In terms of biological role, acts probably as a dual specificity protein kinase. Regulates hydrogen peroxide (H(2)O(2)) homeostasis and improves salt tolerance by phosphorylating tyrosine residues of CATC thus activating its catalase activity. Promotes growth at the seedling stage and prevents grain yield loss under salt stress conditions. The polypeptide is Salt tolerance receptor-like cytoplasmic kinase 1 (Oryza sativa subsp. japonica (Rice)).